A 1487-amino-acid polypeptide reads, in one-letter code: MDGASAKQDGLWESKSSSDVSSCPEASLETVGSLARLPDQQDTAQDASVEVNRGFKEEGSPDRSSQVAICQNGQIPDLQLSLDPTTSPVGPDASTGVDGFHDNLRNSQGTSAEGSVRKEALQSLRLSLPMQETQLCSTASSLPLEKEEQVRLQARKRLEEQLMQYRVKRHRERSSQPATKMKLFSTLDPELMLNPENLPRASTVAVTKEYSFLRTSVPRGPKVGSLGLLAHSKEKKNSKSSKIRSLADYRTEDPSDSGGLGSTADAVGSSLKQSRSSTSVVSEVSPSSETDNRVESASMTGDSVSEADGNESDSSSHSSLSARGACGVLGNVGMPGTAYMVDGQEISAEALGQFPSIKDVLQAAAAQHQDQNQEANGEVRSRRDSICSSVSMESSLAEPQDELLQILKDKRRLEGQVEALSLEASQALQEKAELQAQLAALSTRLQAQVEHSHSSQQKQDSLSSEVDTLKQSCWDLGRAMTDLQSMLEAKNASLASSNNDLQVAEEQYQRLMAKVEDMQRNILSKDNTVHDLRQQMTALQSQLQQVQLERTTLTSKLQASQAEITSLQHARQWYQQQLTLAQEARVRLQGEMAHIQVGQMTQAGLLEHLKLENVSLSHQLTETQHRSIKEKERIAVQLQSIEADMLDQEAAFVQIREAKTMVEEDLQRRLEEFEGEREQLQKVADAAASLEQQLEQVKLTLFQRDQQLAALQQEHLDVIKQLTSTQEALQAKGQSLDDLHTRYDELQARLEELQREADSREDAIHFLQNEKIVLEVALQSAKSDKEELDRGARRLEEDTEETSGLLEQLRQDLAVKSNQVEHLQQETATLRKQMQKVKEQFVQQKVMVEAYRRDATSKDQLINELKATKKRLDSEMKELRQELIKLQGEKKTVEVEHSRLQKDMSLVHQQMAELEGHLQSVQKERDEMEIHLQSLKFDKEQMIALTEANETLKKQIEELQQEAKKAITEQKQKMKRLGSDLTSAQKEMKTKHKAYENAVSILSRRLQEALASKEATDAELNQLRAQSTGGSSDPVLHEKIRALEVELQNVGQSKILLEKELQEVITMTSQELEESREKVLELEDELQESRGFRRKIKRLEESNKKLALELEHERGKLTGLGQSNAALREHNSILETALAKREADLVQLNLQVQAVLQRKEEEDRQMKQLVQALQVSLEKEKMEVNSLKEQMAAARIEAGHNRRHFKAATLELSEVKKELQAKEHLVQTLQAEVDELQIQDGKHSQEIAQFQTELAEARTQLQLLQKKLDEQMSQQPTGSQEMEDLKWELDQKEREIQSLKQQLDLTEQQGKKELEGTQQTLQTIKSELEMVQEDLSETQKDKFMLQAKVSELKNNMKTLLQQNQQLKLDLRRGAAKKKEPKGESNSSSPATPIKIPDCPVPASLLEELLRPPPAVSKEPLKNLNNCLQQLKQEMDSLQRQMEEHTITVHESLSSWAQVEAAPAEHAHPRGDTKLHNQNSVPRDGLGQ.

Met1 carries the post-translational modification N-acetylmethionine. The segment at 1-118 (MDGASAKQDG…GTSAEGSVRK (118 aa)) is disordered. Phosphoserine is present on residues Ser18 and Ser60. Residues 62–74 (DRSSQVAICQNGQ) show a composition bias toward polar residues. Positions 121–141 (LQSLRLSLPMQETQLCSTASS) are interaction with GOPC. Residues 172–257 (ERSSQPATKM…DYRTEDPSDS (86 aa)) form a golgi-targeting domain region. Disordered stretches follow at residues 221-321 (PKVG…SSLS) and 365-394 (AAQH…SMES). Composition is skewed to low complexity over residues 269 to 288 (SSLK…SPSS), 312 to 321 (SDSSSHSSLS), and 365 to 375 (AAQHQDQNQEA). Ser270 carries the phosphoserine modification. Positions 358-1454 (KDVLQAAAAQ…TITVHESLSS (1097 aa)) form a coiled coil. Ser381, Ser385, and Ser461 each carry phosphoserine. Basic and acidic residues predominate over residues 785 to 796 (KEELDRGARRLE). The segment at 785–804 (KEELDRGARRLEEDTEETSG) is disordered. Ser979 bears the Phosphoserine mark. The span at 1372 to 1382 (RGAAKKKEPKG) shows a compositional bias: basic and acidic residues. 2 disordered regions span residues 1372–1396 (RGAA…IKIP) and 1458–1487 (VEAA…GLGQ). Ser1387 is subject to Phosphoserine. Residues 1462–1474 (PAEHAHPRGDTKL) show a composition bias toward basic and acidic residues. Phosphoserine is present on Ser1479.

Homodimer. Interacts with GOLGA7. Interacts with GOPC. Post-translationally, cleaved by caspases in apoptotic cells. Highly expressed in testis. Transcripts can be found in spermatids during spermatogenesis. No expression in Leydig cells, spermatogonia or spermatocytes. Detected at low levels in all tissues.

It localises to the cytoplasm. The protein resides in the golgi apparatus. Its subcellular location is the golgi stack membrane. Functionally, plays an important role in spermatogenesis and/or testis development. Probably identical with the serologically detectable male antigen (SDM). Probably involved in maintaining Golgi structure. The protein is Golgin subfamily A member 3 (Golga3) of Mus musculus (Mouse).